Reading from the N-terminus, the 102-residue chain is Probable non-specific lipid-transfer protein (102 aa).

The signal sequence occupies residues 1–35; sequence MAMAMGMAMRKEAAVAVMMVMVVTLAAGADAGAGA. 4 cysteine pairs are disulfide-bonded: Cys-37/Cys-71, Cys-45/Cys-59, Cys-60/Cys-95, and Cys-69/Cys-102.

This sequence belongs to the plant LTP family. B11E subfamily. Aleurone.

Functionally, potential phospholipid transfer protein. The chain is Probable non-specific lipid-transfer protein (LTP2) from Hordeum vulgare (Barley).